The chain runs to 414 residues: Gamma-glutamyl phosphate reductase (414 aa).

It belongs to the gamma-glutamyl phosphate reductase family.

Its subcellular location is the cytoplasm. It carries out the reaction L-glutamate 5-semialdehyde + phosphate + NADP(+) = L-glutamyl 5-phosphate + NADPH + H(+). The protein operates within amino-acid biosynthesis; L-proline biosynthesis; L-glutamate 5-semialdehyde from L-glutamate: step 2/2. Catalyzes the NADPH-dependent reduction of L-glutamate 5-phosphate into L-glutamate 5-semialdehyde and phosphate. The product spontaneously undergoes cyclization to form 1-pyrroline-5-carboxylate. This is Gamma-glutamyl phosphate reductase from Clostridium botulinum (strain Eklund 17B / Type B).